Consider the following 434-residue polypeptide: 3-phosphoshikimate 1-carboxyvinyltransferase (434 aa).

K22, S23, and R27 together coordinate 3-phosphoshikimate. A phosphoenolpyruvate-binding site is contributed by K22. Residues G93 and R121 each contribute to the phosphoenolpyruvate site. Residues S168, S169, Q170, S199, D320, and K347 each contribute to the 3-phosphoshikimate site. Phosphoenolpyruvate is bound at residue Q170. D320 acts as the Proton acceptor in catalysis. 3 residues coordinate phosphoenolpyruvate: R351, R394, and K419.

The protein belongs to the EPSP synthase family. Monomer.

It localises to the cytoplasm. The enzyme catalyses 3-phosphoshikimate + phosphoenolpyruvate = 5-O-(1-carboxyvinyl)-3-phosphoshikimate + phosphate. Its pathway is metabolic intermediate biosynthesis; chorismate biosynthesis; chorismate from D-erythrose 4-phosphate and phosphoenolpyruvate: step 6/7. Functionally, catalyzes the transfer of the enolpyruvyl moiety of phosphoenolpyruvate (PEP) to the 5-hydroxyl of shikimate-3-phosphate (S3P) to produce enolpyruvyl shikimate-3-phosphate and inorganic phosphate. The protein is 3-phosphoshikimate 1-carboxyvinyltransferase of Burkholderia ambifaria (strain ATCC BAA-244 / DSM 16087 / CCUG 44356 / LMG 19182 / AMMD) (Burkholderia cepacia (strain AMMD)).